A 478-amino-acid polypeptide reads, in one-letter code: Odorant receptor coreceptor (478 aa).

Residues 1 to 43 (MNVQPTKYHGLVLDLMPNIRLMQGFGHFLFRYVNGPVLIRKLY) are Cytoplasmic-facing. Residues 44–64 (SWWNLIMILLQYFAIMGNLVM) traverse the membrane as a helical segment. Over 65-73 (NTGDVNELT) the chain is Extracellular. Residues 74–94 (ANTITTLFFTHSVTKFIYVAV) form a helical membrane-spanning segment. Residues 95–133 (NSEHFYRTLGIWNQPNSHSLFAESDARYHSIALAKMRKL) are Cytoplasmic-facing. Residues 134-154 (LVMVMVTTVLSVVAWITITFF) traverse the membrane as a helical segment. Residues 155–187 (GDSVKNVFDKETNETYTVEIPRLPIKAWYPWDA) lie on the Extracellular side of the membrane. Asn167 carries an N-linked (GlcNAc...) asparagine glycan. The chain crosses the membrane as a helical span at residues 188 to 208 (MSGVPYFFSFIYQAYFLLFSM). The Cytoplasmic segment spans residues 209 to 343 (CQANLADVMF…VERHKHVVRL (135 aa)). Residues 344-364 (VSAIGETYGAALLLHMLTSTI) form a helical membrane-spanning segment. Over 365–382 (KLTLLAYQATKIDALNVY) the chain is Extracellular. A helical membrane pass occupies residues 383–403 (GLTVIGYLVYALAQVFLFCIF). Residues 404-454 (GNRLIEESSSVMEAAYSCHWYDGSEEAKTFVQIVCQQCQKAMTISGAKFFT) are Cytoplasmic-facing. Residues 455 to 475 (VSLDLFASVLGAVVTYFMVLV) traverse the membrane as a helical segment. The Extracellular segment spans residues 476–478 (QLK).

Belongs to the insect chemoreceptor superfamily. Heteromeric odorant receptor channel (TC 1.A.69) family. Orco subfamily. As to quaternary structure, heterodimer with conventional odorant receptors (ORs). Complexes exist early in the endomembrane system in olfactory sensory neurons (OSNs), coupling these complexes to the conserved ciliary trafficking pathway. In terms of tissue distribution, found specifically within most antennal and maxillary palp sensilla, as well as in a subset of proboscis sensilla.

The protein localises to the cell membrane. Functionally, odorant coreceptor which complexes with conventional odorant receptors (ORs) to form odorant-sensing units, providing sensitive and prolonged odorant signaling and calcium permeability. Orco is a universal and integral part of the functional odorant receptor, involved in the dendritic localization of other olfactory receptors. Plays a key role in preferred attraction of females for humans over non-human hosts for blood feeding. Human attraction plays a crucial role in the transmission of dengue and yellow fever by the mosquito. Also required for the response to the insect repellent IR3535; or to N,N-Diethyl-meta-toluamide (DEET), the most widely used insect repellent worldwide. In Aedes aegypti (Yellowfever mosquito), this protein is Odorant receptor coreceptor (SGPRor7).